The sequence spans 211 residues: PITH domain-containing protein GA19395 (211 aa).

A PITH domain is found at 20-192; sequence DHALEMGIEY…GVTICNYEAR (173 aa).

It belongs to the PITHD1 family.

The chain is PITH domain-containing protein GA19395 from Drosophila pseudoobscura pseudoobscura (Fruit fly).